Reading from the N-terminus, the 333-residue chain is Holliday junction branch migration complex subunit RuvB (333 aa).

A large ATPase domain (RuvB-L) region spans residues 1–182 (MDERLLSGES…FGVLSRLEYY (182 aa)). ATP contacts are provided by residues leucine 21, arginine 22, glycine 63, lysine 66, threonine 67, threonine 68, 129–131 (EDF), arginine 172, tyrosine 182, and arginine 219. Residue threonine 67 coordinates Mg(2+). Residues 183–253 (TVDQLSAIVE…ITQMALELLQ (71 aa)) are small ATPAse domain (RuvB-S). Positions 256–333 (KLGLDHIDHK…EHFGMEMPKV (78 aa)) are head domain (RuvB-H). DNA is bound by residues arginine 311 and arginine 316.

The protein belongs to the RuvB family. In terms of assembly, homohexamer. Forms an RuvA(8)-RuvB(12)-Holliday junction (HJ) complex. HJ DNA is sandwiched between 2 RuvA tetramers; dsDNA enters through RuvA and exits via RuvB. An RuvB hexamer assembles on each DNA strand where it exits the tetramer. Each RuvB hexamer is contacted by two RuvA subunits (via domain III) on 2 adjacent RuvB subunits; this complex drives branch migration. In the full resolvosome a probable DNA-RuvA(4)-RuvB(12)-RuvC(2) complex forms which resolves the HJ.

It is found in the cytoplasm. The enzyme catalyses ATP + H2O = ADP + phosphate + H(+). Its function is as follows. The RuvA-RuvB-RuvC complex processes Holliday junction (HJ) DNA during genetic recombination and DNA repair, while the RuvA-RuvB complex plays an important role in the rescue of blocked DNA replication forks via replication fork reversal (RFR). RuvA specifically binds to HJ cruciform DNA, conferring on it an open structure. The RuvB hexamer acts as an ATP-dependent pump, pulling dsDNA into and through the RuvAB complex. RuvB forms 2 homohexamers on either side of HJ DNA bound by 1 or 2 RuvA tetramers; 4 subunits per hexamer contact DNA at a time. Coordinated motions by a converter formed by DNA-disengaged RuvB subunits stimulates ATP hydrolysis and nucleotide exchange. Immobilization of the converter enables RuvB to convert the ATP-contained energy into a lever motion, pulling 2 nucleotides of DNA out of the RuvA tetramer per ATP hydrolyzed, thus driving DNA branch migration. The RuvB motors rotate together with the DNA substrate, which together with the progressing nucleotide cycle form the mechanistic basis for DNA recombination by continuous HJ branch migration. Branch migration allows RuvC to scan DNA until it finds its consensus sequence, where it cleaves and resolves cruciform DNA. The polypeptide is Holliday junction branch migration complex subunit RuvB (Bacillus mycoides (strain KBAB4) (Bacillus weihenstephanensis)).